The following is a 349-amino-acid chain: Aminomethyltransferase (349 aa).

The protein belongs to the GcvT family. In terms of assembly, the glycine cleavage system is composed of four proteins: P, T, L and H.

It carries out the reaction N(6)-[(R)-S(8)-aminomethyldihydrolipoyl]-L-lysyl-[protein] + (6S)-5,6,7,8-tetrahydrofolate = N(6)-[(R)-dihydrolipoyl]-L-lysyl-[protein] + (6R)-5,10-methylene-5,6,7,8-tetrahydrofolate + NH4(+). The glycine cleavage system catalyzes the degradation of glycine. The chain is Aminomethyltransferase from Thermus thermophilus (strain ATCC 27634 / DSM 579 / HB8).